Consider the following 527-residue polypeptide: Catalase (527 aa).

Residue Ala-2 is modified to N-acetylalanine. Ser-9 carries the phosphoserine modification. Catalysis depends on residues His-75 and Asn-148. NADP(+) contacts are provided by His-194, Ser-201, Arg-203, and Asn-213. Lys-221 bears the N6-succinyllysine mark. The residue at position 233 (Lys-233) is an N6-acetyllysine. The NADP(+) site is built by Lys-237, Trp-303, His-305, and Lys-306. Lys-306 bears the N6-acetyllysine; alternate mark. The residue at position 306 (Lys-306) is an N6-succinyllysine; alternate. Position 358 (Tyr-358) interacts with heme. 2 positions are modified to phosphoserine: Ser-417 and Ser-422. Lys-480 bears the N6-acetyllysine; alternate mark. Position 480 is an N6-succinyllysine; alternate (Lys-480). Lys-499 is modified (N6-acetyllysine). A Phosphothreonine modification is found at Thr-511. Ser-515 and Ser-517 each carry phosphoserine. The Microbody targeting signal; atypical signature appears at 524 to 527 (KANL).

This sequence belongs to the catalase family. Homotetramer. Interacts (via microbody targeting signal) with PEX5, monomeric form interacts with PEX5, leading to its translocation into peroxisomes. Heme serves as cofactor. NADP(+) is required as a cofactor.

Its subcellular location is the peroxisome matrix. It carries out the reaction 2 H2O2 = O2 + 2 H2O. Functionally, catalyzes the degradation of hydrogen peroxide (H(2)O(2)) generated by peroxisomal oxidases to water and oxygen, thereby protecting cells from the toxic effects of hydrogen peroxide. Promotes growth of cells including T-cells, B-cells, myeloid leukemia cells, melanoma cells, mastocytoma cells and normal and transformed fibroblast cells. This is Catalase (CAT) from Homo sapiens (Human).